Reading from the N-terminus, the 535-residue chain is Succinate-semialdehyde dehydrogenase, mitochondrial (535 aa).

The N-terminal 47 residues, 1–47 (MATCIWLRSCGARRLGWTFPGCRLRPRAGGLVPASGPAPGPAQLRCY), are a transit peptide targeting the mitochondrion. Residue lysine 126 is modified to N6-acetyllysine; alternate. Lysine 126 bears the N6-succinyllysine; alternate mark. N6-succinyllysine occurs at positions 135 and 184. NAD(+) contacts are provided by residues arginine 213 and 228-231 (KPAE). Residue arginine 213 participates in substrate binding. At lysine 265 the chain carries N6-acetyllysine; alternate. Lysine 265 is subject to N6-succinyllysine; alternate. An NAD(+)-binding site is contributed by 284-289 (GSTTTG). The Proton acceptor role is filled by glutamate 306. Arginine 334 provides a ligand contact to substrate. The active-site Nucleophile is the cysteine 340. Cysteine 340 and cysteine 342 are joined by a disulfide. Lysine 365 bears the N6-acetyllysine mark. Position 402 is an N6-succinyllysine (lysine 402). Residue lysine 411 is modified to N6-acetyllysine. Serine 498 provides a ligand contact to substrate. Serine 499 bears the Phosphoserine mark.

Belongs to the aldehyde dehydrogenase family. As to quaternary structure, homotetramer.

It localises to the mitochondrion. It catalyses the reaction succinate semialdehyde + NAD(+) + H2O = succinate + NADH + 2 H(+). It participates in amino-acid degradation; 4-aminobutanoate degradation. With respect to regulation, redox-regulated. Inhibited under oxydizing conditions. Catalyzes one step in the degradation of the inhibitory neurotransmitter gamma-aminobutyric acid (GABA). This is Succinate-semialdehyde dehydrogenase, mitochondrial (ALDH5A1) from Pan paniscus (Pygmy chimpanzee).